We begin with the raw amino-acid sequence, 159 residues long: Prs ADP-ribosylating antitoxin (159 aa).

Residues 99–159 (EDMVEESGET…LAQIQSGAFA (61 aa)) are sufficient to neutralize toxin.

This sequence belongs to the MbcA/ParS/Xre antitoxin family. Forms heterotetrameric ParS(2)-ParT(2) complexes. The 2 antitoxin fragments do not make contact in the crystal structure.

In terms of biological role, antitoxin component of a type II toxin-antitoxin (TA) system. Neutralizes the bacteriostatic effect of cognate toxin ParT by inserting into its active site. The protein is Prs ADP-ribosylating antitoxin of Sphingobium sp. (strain YBL2).